The following is a 248-amino-acid chain: Pulmonary surfactant-associated protein A (248 aa).

Residues 1-20 form the signal peptide; the sequence is MLLCSLTLTLLWMVASGLEC. In terms of domain architecture, Collagen-like spans 28–100; that stretch reads GSPGIPGTPG…PGERGPPGFP (73 aa). The tract at residues 29-102 is disordered; sequence SPGIPGTPGS…ERGPPGFPAY (74 aa). P30, P33, P36, P42, P54, P57, P63, P67, and P70 each carry 4-hydroxyproline. Over residues 42–51 the composition is skewed to basic and acidic residues; sequence PGRDGRDGIK. The span at 54-65 shows a compositional bias: pro residues; that stretch reads PGPPGPMGPPGG. Over residues 69 to 82 the composition is skewed to low complexity; it reads LPGRDGMTGAPGLP. The segment covering 84 to 93 has biased composition (basic and acidic residues); it reads ERGEKGEPGE. In terms of domain architecture, C-type lectin spans 132–248; the sequence is LAVGEKVFST…LQYRLAICEF (117 aa). 2 disulfide bridges follow: C155–C246 and C224–C238. N207 carries an N-linked (GlcNAc...) asparagine glycan. 4 residues coordinate Ca(2+): E215, R217, N234, and D235.

It belongs to the SFTPA family. Oligomeric complex of 6 set of homotrimers.

It is found in the secreted. It localises to the extracellular space. The protein resides in the extracellular matrix. Its subcellular location is the surface film. Its function is as follows. In presence of calcium ions, it binds to surfactant phospholipids and contributes to lower the surface tension at the air-liquid interface in the alveoli of the mammalian lung and is essential for normal respiration. Enhances the expression of MYO18A/SP-R210 on alveolar macrophages. The sequence is that of Pulmonary surfactant-associated protein A (SFTPA1) from Bos taurus (Bovine).